Here is a 271-residue protein sequence, read N- to C-terminus: Putative carboxymethylenebutenolidase (271 aa).

Catalysis depends on residues C147, D204, and H236.

It belongs to the dienelactone hydrolase family.

It catalyses the reaction 2-(5-oxo-2,5-dihydrofuran-2-ylidene)acetate + H2O = 4-oxohex-2-enedioate + H(+). The chain is Putative carboxymethylenebutenolidase (ysgA) from Escherichia coli O157:H7.